The sequence spans 277 residues: Indole-3-glycerol phosphate synthase (277 aa).

Belongs to the TrpC family.

It carries out the reaction 1-(2-carboxyphenylamino)-1-deoxy-D-ribulose 5-phosphate + H(+) = (1S,2R)-1-C-(indol-3-yl)glycerol 3-phosphate + CO2 + H2O. Its pathway is amino-acid biosynthesis; L-tryptophan biosynthesis; L-tryptophan from chorismate: step 4/5. This Pseudomonas putida (strain ATCC 47054 / DSM 6125 / CFBP 8728 / NCIMB 11950 / KT2440) protein is Indole-3-glycerol phosphate synthase.